The sequence spans 561 residues: Urocanate hydratase (561 aa).

NAD(+) is bound by residues 52 to 53 (GG), Q130, 176 to 178 (GMG), E196, R201, 242 to 243 (NA), 263 to 267 (QTSAH), 273 to 274 (YL), and Y322. C410 is a catalytic residue. G492 is an NAD(+) binding site.

Belongs to the urocanase family. The cofactor is NAD(+).

It is found in the cytoplasm. It carries out the reaction 4-imidazolone-5-propanoate = trans-urocanate + H2O. It participates in amino-acid degradation; L-histidine degradation into L-glutamate; N-formimidoyl-L-glutamate from L-histidine: step 2/3. Its function is as follows. Catalyzes the conversion of urocanate to 4-imidazolone-5-propionate. This is Urocanate hydratase from Enterobacter sp. (strain 638).